Here is an 817-residue protein sequence, read N- to C-terminus: LisH domain-containing protein ARMC9 (817 aa).

Residues 15–47 form the LisH domain; that stretch reads SESDLLSMISEYLKFGEFEETARTFEKEVKRKG. 3 disordered regions span residues 580–605, 610–629, and 642–817; these read SATIPEQEPESDDEEDEDDDDDEEDV, LDKEEVLQPQPKELSGESLL, and KTKR…SNRK. The span at 586–605 shows a compositional bias: acidic residues; the sequence is QEPESDDEEDEDDDDDEEDV. 2 stretches are compositionally biased toward polar residues: residues 692–715 and 740–750; these read SSRPATRTGSRPSTAESIHQTLAT and GQTTNSVQSYS. The span at 805–817 shows a compositional bias: low complexity; it reads GRPSQQSSQSNRK.

Expressed in multiple CNS regions, including the cerebellum, all periventricular regions, and all layers of the retina.

The protein localises to the cytoplasm. Its subcellular location is the cytoskeleton. The protein resides in the cilium basal body. It is found in the cell projection. It localises to the cilium. The protein localises to the microtubule organizing center. Its subcellular location is the centrosome. The protein resides in the centriole. Involved in ciliogenesis. It is required for appropriate acetylation and polyglutamylation of ciliary microtubules, and regulation of cilium length. Acts as a positive regulator of hedgehog (Hh) signaling. This is LisH domain-containing protein ARMC9 (armc9) from Danio rerio (Zebrafish).